An 887-amino-acid chain; its full sequence is Phosphatidylinositol 3-kinase catalytic subunit type 3 (887 aa).

Residues 35–184 form the C2 PI3K-type domain; it reads YKAVLEDPML…LAKLTKAHRQ (150 aa). The tract at residues 149–170 is disordered; the sequence is VEADGSEPTRTPGRTSSTLSED. The segment covering 156–170 has biased composition (polar residues); it reads PTRTPGRTSSTLSED. T163 is subject to Phosphothreonine; by AMPK. S165 is modified (phosphoserine; by AMPK). A phosphoserine mark is found at S244, S261, and S282. Positions 283-520 constitute a PIK helical domain; it reads DHDLKPNATT…PKTHEMYLNV (238 aa). Residues 416–467 form a disordered region; the sequence is EPTKKDSQASVSESLSSSGVSSADIDSSQIITNPLPPVASPPPASKSKEVSD. A compositionally biased stretch (low complexity) spans 423-444; sequence QASVSESLSSSGVSSADIDSSQ. The segment covering 449–459 has biased composition (pro residues); the sequence is PLPPVASPPPA. The region spanning 605 to 871 is the PI3K/PI4K catalytic domain; it reads IPETATLFKS…LIDESVHALF (267 aa). Residues 611–617 are G-loop; sequence LFKSALM. The segment at 740–748 is catalytic loop; the sequence is GVGDRHLDN. The tract at residues 759-780 is activation loop; the sequence is HIDFGYILGRDPKPLPPPMKLN.

Belongs to the PI3/PI4-kinase family. Component of the PI3K (PI3KC3/PI3K-III/class III phosphatidylinositol 3-kinase) complex the core of which is composed of the catalytic subunit PIK3C3, the regulatory subunit PIK3R4 and BECN1 associating with additional regulatory/auxiliary subunits to form alternative complex forms. Alternative complex forms containing a fourth regulatory subunit in a mutually exclusive manner are: the PI3K complex I (PI3KC3-C1) containing ATG14, and the PI3K complex II (PI3KC3-C2) containing UVRAG. PI3KC3-C1 displays a V-shaped architecture with PIK3R4 serving as a bridge between PIK3C3 and the ATG14:BECN1 subcomplex. Both, PI3KC3-C1 and PI3KC3-C2, can associate with further regulatory subunits such as RUBCN, SH3GLB1/Bif-1 and AMBRA1. PI3KC3-C1 probably associates with PIK3CB. Interacts with RAB7A in the presence of PIK3R4. Interacts with AMBRA1. Interacts with BECN1P1/BECN2. Interacts with SLAMF1. May interact with DYN2. May be a component of a complex composed of RAB5A (in GDP-bound form), DYN2 and PIK3C3. Interacts with NCKAP1L. Interacts with ATG14; this interaction is increased in the absence of TMEM39A. Interacts with STEEP1; the interaction is STING1-dependent and required for trafficking of STING1 from the endoplasmic reticulum. Interacts with YWHAG. Interacts with ARMC3. Mn(2+) serves as cofactor. In terms of processing, ubiquitinated via 'Lys-29'- and 'Lys-48'-linked ubiquitination by UBE3C, promoting its degradation. Deubiquitination by ZRANB1/TRABID promotes its stabilization, leading to autophagosome maturation.

It localises to the midbody. The protein resides in the late endosome. It is found in the cytoplasmic vesicle. Its subcellular location is the autophagosome. It catalyses the reaction a 1,2-diacyl-sn-glycero-3-phospho-(1D-myo-inositol) + ATP = a 1,2-diacyl-sn-glycero-3-phospho-(1D-myo-inositol-3-phosphate) + ADP + H(+). Its function is as follows. Catalytic subunit of the PI3K complex that mediates formation of phosphatidylinositol 3-phosphate; different complex forms are believed to play a role in multiple membrane trafficking pathways: PI3KC3-C1 is involved in initiation of autophagosomes and PI3KC3-C2 in maturation of autophagosomes and endocytosis. As part of PI3KC3-C1, promotes endoplasmic reticulum membrane curvature formation prior to vesicle budding. Involved in regulation of degradative endocytic trafficking and required for the abscission step in cytokinesis, probably in the context of PI3KC3-C2. Involved in the transport of lysosomal enzyme precursors to lysosomes. Required for transport from early to late endosomes. This chain is Phosphatidylinositol 3-kinase catalytic subunit type 3, found in Rattus norvegicus (Rat).